We begin with the raw amino-acid sequence, 358 residues long: Transcriptional repressor protein KorB (358 aa).

Low complexity predominate over residues 1-42 (MTAAQAKTTKKNTAAAAQEAAGAAQPSGLGLDSIGDLSSLLD). Disordered regions lie at residues 1 to 79 (MTAA…FSPE) and 256 to 305 (DPNT…DKLK). The span at 275–285 (AGDGQDGEDGD) shows a compositional bias: acidic residues. A compositionally biased stretch (basic and acidic residues) spans 286 to 305 (QDGKDAKEKGAKEPDPDKLK).

It belongs to the ParB family.

In terms of biological role, in conjunction with KorA, inhibits the transcription of the kilA, trfA and korAB operons. Is also involved in the negative control of the kilB operon. The chain is Transcriptional repressor protein KorB (korB) from Escherichia coli.